We begin with the raw amino-acid sequence, 123 residues long: T-complex protein 1 subunit alpha (123 aa).

Gly-68 serves as a coordination point for ADP.

It belongs to the TCP-1 chaperonin family. Component of the chaperonin-containing T-complex (TRiC), a hexadecamer composed of two identical back-to-back stacked rings enclosing a protein folding chamber. Each ring is made up of eight different subunits: TCP1/CCT1, CCT2, CCT3, CCT4, CCT5, CCT6A/CCT6, CCT7, CCT8. Interacts with PACRG. Interacts with GBA1. Interacts with DLEC1.

It localises to the cytoplasm. It is found in the cytosol. The protein localises to the cytoskeleton. Its subcellular location is the microtubule organizing center. The protein resides in the centrosome. The enzyme catalyses ATP + H2O = ADP + phosphate + H(+). Its function is as follows. Component of the chaperonin-containing T-complex (TRiC), a molecular chaperone complex that assists the folding of actin, tubulin and other proteins upon ATP hydrolysis. The TRiC complex mediates the folding of WRAP53/TCAB1, thereby regulating telomere maintenance. As part of the TRiC complex may play a role in the assembly of BBSome, a complex involved in ciliogenesis regulating transports vesicles to the cilia. The polypeptide is T-complex protein 1 subunit alpha (Mesocricetus auratus (Golden hamster)).